The sequence spans 465 residues: Monogalactosyldiacylglycerol synthase 3, chloroplastic (465 aa).

UDP-binding positions include His86, Arg255, 365-369 (GTIAE), and Glu387.

This sequence belongs to the glycosyltransferase 28 family. In terms of tissue distribution, expressed mainly in roots. Detected in flowers, leaves, stems, siliques and pollen tubes.

It is found in the plastid. The protein resides in the chloroplast outer membrane. The catalysed reaction is a 1,2-diacyl-sn-glycerol + UDP-alpha-D-galactose = a 1,2-diacyl-3-O-(beta-D-galactosyl)-sn-glycerol + UDP + H(+). It carries out the reaction 1,2-di-(9Z,12Z-octadecadienoyl)-sn-glycerol + UDP-alpha-D-galactose = 1,2-di-(9Z,12Z-octadecadienoyl)-3-beta-D-galactosyl-sn-glycerol + UDP + H(+). The enzyme catalyses 1-(9Z-octadecenoyl)-2-hexadecanoyl-sn-glycerol + UDP-alpha-D-galactose = 1-(9Z-octadecenoyl)-2-hexadecanoyl-3-beta-D-galactosyl-sn-glycerol + UDP + H(+). It catalyses the reaction 1,2-di-(9Z-octadecenoyl)-sn-glycerol + UDP-alpha-D-galactose = 1,2-di-(9Z-octadecenoyl)-3-beta-D-galactosyl-sn-glycerol + UDP + H(+). Its activity is regulated as follows. Inhibited by galvestine-1. In terms of biological role, involved in the synthesis of monogalactosyldiacylglycerol, the major structural component of photosynthetic membranes and in the chloroplast envelope biogenesis. Can use both prokaryotic (18:1/16:0) or eukaryotic (18:2/18:2) 1,2-diacylglycerol species, but operates with some preference for the eukaryotic one. Plays a minor role in galactolipid synthesis in chloroplasts. Is essential for membrane lipid remodeling in phosphate-starved roots. Acts as the major factor involved in digalactosyldiacylglycerol (DGDG) biosynthesis in phosphate-starved roots. Does not seem to be required for plant growth under nutrient-sufficient conditions. Required for membrane lipid remodeling in plants grown in acidic conditions. This Arabidopsis thaliana (Mouse-ear cress) protein is Monogalactosyldiacylglycerol synthase 3, chloroplastic.